The sequence spans 287 residues: MAIRKFKPYTPGTRQRVVTDFSEITSAKPERSLIVSKHRVKGRNNRGVITCRHRGGGHKRQYRLVDFRRDKRNINAKVAAIHYDPHRNARLALLFYEDGEKRYIIAPAGVKVGQNVISGESVPIEDGNAMPLSVMPLGSSVHCVELYAGRGAQMVRSAGASAQVMAKEGDYVALKLPSTEVRLVRKECYATLGEVGNSEIRNTSLGKAGRRRWLGRRPQVRGSVMNPCDHPHGGGEGKAPIGRAGPVTPWGKPALGLKTRKKNKPSNKLVVRRRRRISKRSRGGRDS.

The tract at residues 221–287 (RGSVMNPCDH…SKRSRGGRDS (67 aa)) is disordered. Residues 258–287 (KTRKKNKPSNKLVVRRRRRISKRSRGGRDS) are compositionally biased toward basic residues.

It belongs to the universal ribosomal protein uL2 family. Part of the 50S ribosomal subunit. Forms a bridge to the 30S subunit in the 70S ribosome.

One of the primary rRNA binding proteins. Required for association of the 30S and 50S subunits to form the 70S ribosome, for tRNA binding and peptide bond formation. It has been suggested to have peptidyltransferase activity; this is somewhat controversial. Makes several contacts with the 16S rRNA in the 70S ribosome. The protein is Large ribosomal subunit protein uL2 of Prochlorococcus marinus (strain MIT 9312).